The following is a 257-amino-acid chain: MRVDVVSIFPEYFAPLDLSLIGRARASGTLQLAVHDLRTWTHDVHRTVDDTPYGGGPGMVMRPEPWGEALEALAPPGGNPPRLLVPTPAGAPFTQALAHELAAEPHLLFACGRYEGIDQRVLEHAASRMPVTEVSLGDYVLFGGEVAVLVILEAVTRLLPGVLGNVGSLDDESHAHGLLEAPMYTKPAVWRGQEVPTVLRSGDHGKIARWRRDEALARTVARRPDMIAALPPECLDPRDRAALERAGFPDPPEGVAK.

S-adenosyl-L-methionine-binding positions include G112 and 136-141 (LGDYVL).

The protein belongs to the RNA methyltransferase TrmD family. Homodimer.

It localises to the cytoplasm. It carries out the reaction guanosine(37) in tRNA + S-adenosyl-L-methionine = N(1)-methylguanosine(37) in tRNA + S-adenosyl-L-homocysteine + H(+). Its function is as follows. Specifically methylates guanosine-37 in various tRNAs. The protein is tRNA (guanine-N(1)-)-methyltransferase of Salinispora tropica (strain ATCC BAA-916 / DSM 44818 / JCM 13857 / NBRC 105044 / CNB-440).